The following is a 393-amino-acid chain: Acetylornithine aminotransferase (393 aa).

Pyridoxal 5'-phosphate is bound by residues 100-101 (GA) and Phe133. Arg136 provides a ligand contact to N(2)-acetyl-L-ornithine. A pyridoxal 5'-phosphate-binding site is contributed by 218–221 (DEVQ). Residue Lys247 is modified to N6-(pyridoxal phosphate)lysine. Ser274 is a binding site for N(2)-acetyl-L-ornithine. Residue Thr275 participates in pyridoxal 5'-phosphate binding.

Belongs to the class-III pyridoxal-phosphate-dependent aminotransferase family. ArgD subfamily. As to quaternary structure, homodimer. It depends on pyridoxal 5'-phosphate as a cofactor.

It localises to the cytoplasm. The enzyme catalyses N(2)-acetyl-L-ornithine + 2-oxoglutarate = N-acetyl-L-glutamate 5-semialdehyde + L-glutamate. It participates in amino-acid biosynthesis; L-arginine biosynthesis; N(2)-acetyl-L-ornithine from L-glutamate: step 4/4. In Caldanaerobacter subterraneus subsp. tengcongensis (strain DSM 15242 / JCM 11007 / NBRC 100824 / MB4) (Thermoanaerobacter tengcongensis), this protein is Acetylornithine aminotransferase.